A 332-amino-acid polypeptide reads, in one-letter code: Large ribosomal subunit protein uL10 (332 aa).

The segment at 294–332 is disordered; sequence QAAAAPVAVEDNTEEPEEEEEEEEDAAESAAAGLGALFG. The span at 304–320 shows a compositional bias: acidic residues; that stretch reads DNTEEPEEEEEEEEDAA.

It belongs to the universal ribosomal protein uL10 family. In terms of assembly, part of the 50S ribosomal subunit. Forms part of the ribosomal stalk which helps the ribosome interact with GTP-bound translation factors. Forms a heptameric L10(L12)2(L12)2(L12)2 complex, where L10 forms an elongated spine to which the L12 dimers bind in a sequential fashion.

Forms part of the ribosomal stalk, playing a central role in the interaction of the ribosome with GTP-bound translation factors. This Methanosphaera stadtmanae (strain ATCC 43021 / DSM 3091 / JCM 11832 / MCB-3) protein is Large ribosomal subunit protein uL10.